Here is a 311-residue protein sequence, read N- to C-terminus: tRNA pseudouridine synthase B (311 aa).

The active-site Nucleophile is Asp-49.

It belongs to the pseudouridine synthase TruB family. Type 1 subfamily.

The catalysed reaction is uridine(55) in tRNA = pseudouridine(55) in tRNA. Functionally, responsible for synthesis of pseudouridine from uracil-55 in the psi GC loop of transfer RNAs. The protein is tRNA pseudouridine synthase B of Actinobacillus succinogenes (strain ATCC 55618 / DSM 22257 / CCUG 43843 / 130Z).